Reading from the N-terminus, the 1071-residue chain is MLRDGGDEGMFTIPGFSQIQFEGFCRFIDQGLMEELHQFPKIEDTDQEIEFQLFGESYQLVEPLIKERDAVYESITYSSELYVPAGLIWRTGRNMQEQTVLLGNIPLMNSLGTSIVNGIYRIVINQILQSPGIYYSTGLDHNGISVYTGTIISDWGGRSELEIDRKERIWARVSRKQKISILVLSSAMGSSLREILDNVCYPEIFLSFPNEKEKKKIGSKENAILEFYQKFACVGGDPVFSESLCKELQKKFFQQRCELGRIGRRNMNQRLNLDIPPNNTFLLPRDVLAAADHLIGMKFGMGTLDDMNHLKNKRIRSVADLLQDQFGLALVRLENVVRGTICGAIRHKLIPTPRNLVTSTPLTTTYESFFGLHPLSQVLDRTNPLTQIVHGRKSSYLGPGGLTGRTASFRIRDIHPSHYGRICPIDTSEGINVGLIGSLAIHARVGDWGSIETPFYEISERSKEEQMVYLSPSRDEYYMVAAGNSLALTRGIQEEEVGPARYRQEFLTIAWEQIHLRNIYPFQYFSIGASLIPFIEHNDANRALMSSNMQRQAVPLSQSEKCIVGTGLERQAALDSGGSAIAEREGKIIYTDAEKIVLSGNGDTISIPLVMYQRSNKNTWMHQKPQVHRGKYLKKGQILADGAATVGGELALGKNVSVAYMPWEGYNSEDAVLISERLVYDDIYTSFHIRKYEIQTHVTSQGPERITNEIPHLEPYLLRNLDRNGIVMLGSWVETGDVLVGKLTPQTAKESSYAPEDRLLRAILGIQVSTAKETCLKLPIGGRGRVIDVRWGQKKGGSIYNPEMIRVYISQKRKIKVGDKVAGRHGNKGIISKILPRQDMPYLQDGTPVDMVFNPLGVPSRMNVGQMFECSLGLAGDLLGRHYRITPFDERYEQEASRKLVFSELYEASKQTANPWVFEPEYPGKSRIFDGRTGDPFEQPVIIGKSYMLKLIHQVDDKIHGRSSGHYALVTQQPLRGRAKQGGQRVGEMEVWALEGFGVAHILQEMLTYKSDHIRARQEVLGTTIVGGTIPNPEGAPESFRLLVRELRSLSLELNHFLVSEKNFQINRKEV.

It belongs to the RNA polymerase beta chain family. As to quaternary structure, in plastids the minimal PEP RNA polymerase catalytic core is composed of four subunits: alpha, beta, beta', and beta''. When a (nuclear-encoded) sigma factor is associated with the core the holoenzyme is formed, which can initiate transcription.

It localises to the plastid. It is found in the chloroplast. The catalysed reaction is RNA(n) + a ribonucleoside 5'-triphosphate = RNA(n+1) + diphosphate. Functionally, DNA-dependent RNA polymerase catalyzes the transcription of DNA into RNA using the four ribonucleoside triphosphates as substrates. The polypeptide is DNA-directed RNA polymerase subunit beta (Nymphaea alba (White water-lily)).